The chain runs to 184 residues: Inosine triphosphate pyrophosphatase (184 aa).

Thr9–Lys14 contributes to the ITP binding site. Mg(2+) is bound at residue Glu38. Residues Lys50, Asp66 to Thr67, Lys83, Phe142 to Asp145, Lys163, and His168 to Arg169 contribute to the ITP site.

The protein belongs to the HAM1 NTPase family. In terms of assembly, homodimer. The cofactor is Mg(2+). Requires Mn(2+) as cofactor.

The protein localises to the cytoplasm. It is found in the nucleus. The enzyme catalyses ITP + H2O = IMP + diphosphate + H(+). The catalysed reaction is dITP + H2O = dIMP + diphosphate + H(+). It catalyses the reaction XTP + H2O = XMP + diphosphate + H(+). In terms of biological role, pyrophosphatase that hydrolyzes non-canonical purine nucleotides such as inosine triphosphate (ITP), deoxyinosine triphosphate (dITP) or xanthosine 5'-triphosphate (XTP) to their respective monophosphate derivatives. The enzyme does not distinguish between the deoxy- and ribose forms. Probably excludes non-canonical purines from RNA and DNA precursor pools, thus preventing their incorporation into RNA and DNA and avoiding chromosomal lesions. The protein is Inosine triphosphate pyrophosphatase of Tuber melanosporum (strain Mel28) (Perigord black truffle).